We begin with the raw amino-acid sequence, 556 residues long: Glutamine--tRNA ligase (556 aa).

Residues 33 to 43 (PEPNGYLHIGH) carry the 'HIGH' region motif. ATP is bound by residues 34 to 36 (EPN) and 40 to 46 (HIGHAKS). Residues Asp66 and Tyr210 each coordinate L-glutamine. Residues Thr229, 259–260 (RL), and 267–269 (MSK) each bind ATP. Positions 266–270 (VMSKR) match the 'KMSKS' region motif.

The protein belongs to the class-I aminoacyl-tRNA synthetase family. Monomer.

Its subcellular location is the cytoplasm. It carries out the reaction tRNA(Gln) + L-glutamine + ATP = L-glutaminyl-tRNA(Gln) + AMP + diphosphate. The polypeptide is Glutamine--tRNA ligase (Clostridium kluyveri (strain ATCC 8527 / DSM 555 / NBRC 12016 / NCIMB 10680 / K1)).